A 550-amino-acid chain; its full sequence is Membrane protein insertase YidC (550 aa).

The helical transmembrane segment at 3-23 (IKRTVLWVIFFMSAVMLFDNW) threads the bilayer. Residues 34–73 (FPSATQTKTAAPAAPGSSTTASQPTDLPQTTAAAPGSTTP) are disordered. Residues 35–73 (PSATQTKTAAPAAPGSSTTASQPTDLPQTTAAAPGSTTP) are compositionally biased toward low complexity. Transmembrane regions (helical) follow at residues 363–383 (WGWA…PLSA), 429–449 (FGGC…YWVL), 472–492 (PYFI…KLNP), and 503–523 (MMFM…GLVL).

This sequence belongs to the OXA1/ALB3/YidC family. Type 1 subfamily. In terms of assembly, interacts with the Sec translocase complex via SecD. Specifically interacts with transmembrane segments of nascent integral membrane proteins during membrane integration.

It is found in the cell inner membrane. Its function is as follows. Required for the insertion and/or proper folding and/or complex formation of integral membrane proteins into the membrane. Involved in integration of membrane proteins that insert both dependently and independently of the Sec translocase complex, as well as at least some lipoproteins. Aids folding of multispanning membrane proteins. The sequence is that of Membrane protein insertase YidC from Paraburkholderia phymatum (strain DSM 17167 / CIP 108236 / LMG 21445 / STM815) (Burkholderia phymatum).